A 415-amino-acid polypeptide reads, in one-letter code: Heterogeneous nuclear ribonucleoprotein F (415 aa).

Met-1 is subject to N-acetylmethionine. Residue Met-2 is modified to N-acetylmethionine; in Heterogeneous nuclear ribonucleoprotein F, N-terminally processed. Residues 11–90 enclose the RRM 1 domain; it reads YVVKLRGLPW…RYIEVFKSHR (80 aa). A Glycyl lysine isopeptide (Lys-Gly) (interchain with G-Cter in SUMO) cross-link involves residue Lys-72. Positions 81-86 are interaction with RNA; it reads RYIEVF. Lys-87 participates in a covalent cross-link: Glycyl lysine isopeptide (Lys-Gly) (interchain with G-Cter in SUMO2). 3 positions are modified to phosphoserine: Ser-104, Ser-107, and Ser-161. Residues 111 to 188 form the RRM 2 domain; it reads GFVRLRGLPF…RYIEVFKSSQ (78 aa). Lys-167 is covalently cross-linked (Glycyl lysine isopeptide (Lys-Gly) (interchain with G-Cter in SUMO2)). Residues 179–184 are interaction with RNA; that stretch reads RYIEVF. A Glycyl lysine isopeptide (Lys-Gly) (interchain with G-Cter in SUMO2) cross-link involves residue Lys-185. Ser-187, Ser-193, and Ser-195 each carry phosphoserine. Lys-200 is subject to N6-acetyllysine; alternate. Lys-200 is covalently cross-linked (Glycyl lysine isopeptide (Lys-Gly) (interchain with G-Cter in SUMO2); alternate). At Thr-215 the chain carries Phosphothreonine. Residue Lys-224 is modified to N6-acetyllysine; alternate. Lys-224 is covalently cross-linked (Glycyl lysine isopeptide (Lys-Gly) (interchain with G-Cter in SUMO2); alternate). At Ser-265 the chain carries Phosphoserine. An RRM 3 domain is found at 289-366; it reads HCVHMRGLPY…IELFLNSTTG (78 aa). Residues 355–360 are interaction with RNA; that stretch reads RYIELF.

As to quaternary structure, identified in the spliceosome C complex. Interacts with AGO1, AGO2, TBP and TXNL4/DIM1. Sumoylated.

Its subcellular location is the nucleus. It localises to the nucleoplasm. In terms of biological role, component of the heterogeneous nuclear ribonucleoprotein (hnRNP) complexes which provide the substrate for the processing events that pre-mRNAs undergo before becoming functional, translatable mRNAs in the cytoplasm. Plays a role in the regulation of alternative splicing events. Binds G-rich sequences in pre-mRNAs and keeps target RNA in an unfolded state. This chain is Heterogeneous nuclear ribonucleoprotein F (Hnrnpf), found in Mus musculus (Mouse).